The chain runs to 286 residues: Bifunctional protein FolD (286 aa).

NADP(+) is bound by residues 165 to 167, Ser190, and Val231; that span reads GRS.

Belongs to the tetrahydrofolate dehydrogenase/cyclohydrolase family. In terms of assembly, homodimer.

The catalysed reaction is (6R)-5,10-methylene-5,6,7,8-tetrahydrofolate + NADP(+) = (6R)-5,10-methenyltetrahydrofolate + NADPH. It carries out the reaction (6R)-5,10-methenyltetrahydrofolate + H2O = (6R)-10-formyltetrahydrofolate + H(+). It functions in the pathway one-carbon metabolism; tetrahydrofolate interconversion. Its function is as follows. Catalyzes the oxidation of 5,10-methylenetetrahydrofolate to 5,10-methenyltetrahydrofolate and then the hydrolysis of 5,10-methenyltetrahydrofolate to 10-formyltetrahydrofolate. The polypeptide is Bifunctional protein FolD (Bacillus cereus (strain ATCC 14579 / DSM 31 / CCUG 7414 / JCM 2152 / NBRC 15305 / NCIMB 9373 / NCTC 2599 / NRRL B-3711)).